A 198-amino-acid chain; its full sequence is Protein GrpE (198 aa).

The protein belongs to the GrpE family. In terms of assembly, homodimer.

The protein resides in the cytoplasm. Its function is as follows. Participates actively in the response to hyperosmotic and heat shock by preventing the aggregation of stress-denatured proteins, in association with DnaK and GrpE. It is the nucleotide exchange factor for DnaK and may function as a thermosensor. Unfolded proteins bind initially to DnaJ; upon interaction with the DnaJ-bound protein, DnaK hydrolyzes its bound ATP, resulting in the formation of a stable complex. GrpE releases ADP from DnaK; ATP binding to DnaK triggers the release of the substrate protein, thus completing the reaction cycle. Several rounds of ATP-dependent interactions between DnaJ, DnaK and GrpE are required for fully efficient folding. The polypeptide is Protein GrpE (Actinobacillus pleuropneumoniae serotype 3 (strain JL03)).